The sequence spans 547 residues: Chaperonin GroEL (547 aa).

ATP-binding positions include 30–33, Lys-51, 87–91, Gly-415, and Asp-496; these read TLGP and DGTTT.

Belongs to the chaperonin (HSP60) family. In terms of assembly, forms a cylinder of 14 subunits composed of two heptameric rings stacked back-to-back. Interacts with the co-chaperonin GroES.

The protein localises to the cytoplasm. The enzyme catalyses ATP + H2O + a folded polypeptide = ADP + phosphate + an unfolded polypeptide.. In terms of biological role, together with its co-chaperonin GroES, plays an essential role in assisting protein folding. The GroEL-GroES system forms a nano-cage that allows encapsulation of the non-native substrate proteins and provides a physical environment optimized to promote and accelerate protein folding. The protein is Chaperonin GroEL of Actinobacillus pleuropneumoniae (Haemophilus pleuropneumoniae).